A 152-amino-acid polypeptide reads, in one-letter code: MSEKYIVTWDMLQIHARKLASRLMPSEQWKGIIAVSRGGLVPGALLARELGIRHVDTVCISSYDHDNQRELKVLKRAEGDGEGFIIIDDLVDTGGTAVAIREMYPKAHFVTIFAKPAGRPLVDDYVIDIPQNTWIEQPWDMGVVFVPPISGR.

Residues 37–38 (RG), arginine 69, and 88–96 (DDLVDTGGT) contribute to the 5-phospho-alpha-D-ribose 1-diphosphate site. Arginine 69 is a binding site for GMP. Residue aspartate 89 participates in Mg(2+) binding. Guanine-binding residues include aspartate 92 and isoleucine 135. Xanthine contacts are provided by aspartate 92 and isoleucine 135. Residues 92 to 96 (DTGGT) and 134 to 135 (WI) each bind GMP.

Belongs to the purine/pyrimidine phosphoribosyltransferase family. XGPT subfamily. Homotetramer. It depends on Mg(2+) as a cofactor.

Its subcellular location is the cell inner membrane. It carries out the reaction GMP + diphosphate = guanine + 5-phospho-alpha-D-ribose 1-diphosphate. It catalyses the reaction XMP + diphosphate = xanthine + 5-phospho-alpha-D-ribose 1-diphosphate. The enzyme catalyses IMP + diphosphate = hypoxanthine + 5-phospho-alpha-D-ribose 1-diphosphate. It participates in purine metabolism; GMP biosynthesis via salvage pathway; GMP from guanine: step 1/1. It functions in the pathway purine metabolism; XMP biosynthesis via salvage pathway; XMP from xanthine: step 1/1. In terms of biological role, purine salvage pathway enzyme that catalyzes the transfer of the ribosyl-5-phosphate group from 5-phospho-alpha-D-ribose 1-diphosphate (PRPP) to the N9 position of the 6-oxopurines guanine and xanthine to form the corresponding ribonucleotides GMP (guanosine 5'-monophosphate) and XMP (xanthosine 5'-monophosphate), with the release of PPi. To a lesser extent, also acts on hypoxanthine. This chain is Xanthine-guanine phosphoribosyltransferase, found in Escherichia fergusonii (strain ATCC 35469 / DSM 13698 / CCUG 18766 / IAM 14443 / JCM 21226 / LMG 7866 / NBRC 102419 / NCTC 12128 / CDC 0568-73).